Reading from the N-terminus, the 211-residue chain is Ribosomal RNA small subunit methyltransferase G (211 aa).

Residues Gly76, Leu81, 127-128 (VE), and Arg142 each bind S-adenosyl-L-methionine.

Belongs to the methyltransferase superfamily. RNA methyltransferase RsmG family.

Its subcellular location is the cytoplasm. It catalyses the reaction guanosine(527) in 16S rRNA + S-adenosyl-L-methionine = N(7)-methylguanosine(527) in 16S rRNA + S-adenosyl-L-homocysteine. Functionally, specifically methylates the N7 position of guanine in position 527 of 16S rRNA. The polypeptide is Ribosomal RNA small subunit methyltransferase G (Vibrio campbellii (strain ATCC BAA-1116)).